The following is a 316-amino-acid chain: Biotin synthase (316 aa).

Residues 36–264 (FDNRITLCAI…TATLRICGGR (229 aa)) enclose the Radical SAM core domain. Positions 53, 57, and 60 each coordinate [4Fe-4S] cluster. Residues C129, C189, and R259 each coordinate [2Fe-2S] cluster.

Belongs to the radical SAM superfamily. Biotin synthase family. Homodimer. [4Fe-4S] cluster is required as a cofactor. It depends on [2Fe-2S] cluster as a cofactor.

It carries out the reaction (4R,5S)-dethiobiotin + (sulfur carrier)-SH + 2 reduced [2Fe-2S]-[ferredoxin] + 2 S-adenosyl-L-methionine = (sulfur carrier)-H + biotin + 2 5'-deoxyadenosine + 2 L-methionine + 2 oxidized [2Fe-2S]-[ferredoxin]. It functions in the pathway cofactor biosynthesis; biotin biosynthesis; biotin from 7,8-diaminononanoate: step 2/2. Its function is as follows. Catalyzes the conversion of dethiobiotin (DTB) to biotin by the insertion of a sulfur atom into dethiobiotin via a radical-based mechanism. The polypeptide is Biotin synthase (Desulfovibrio desulfuricans (strain ATCC 27774 / DSM 6949 / MB)).